The chain runs to 760 residues: GLC7-interacting protein 4 (760 aa).

Disordered regions lie at residues 449 to 573 (KKKP…SLQS) and 593 to 626 (KSAS…SSST). 2 stretches are compositionally biased toward low complexity: residues 454-474 (ITKL…ASPS) and 494-506 (SSRS…VRTT). Residues serine 497 and serine 501 each carry the phosphoserine modification. Residues 512–525 (AETKKSVVSPEKRK) show a composition bias toward basic and acidic residues. Residues 534–554 (SSSLQSYTNKQQTSYLNSTRH) show a composition bias toward polar residues. Low complexity-rich tracts occupy residues 561–573 (SKLN…SLQS) and 594–626 (SAST…SSST). Position 609 is a phosphoserine (serine 609).

The protein belongs to the GIP4 family. In terms of assembly, interacts with GLC7.

It is found in the cytoplasm. In terms of biological role, GLC7 phosphatase-regulatory protein involved in GLC7 subcellular redistribution and chromosome segregation. This chain is GLC7-interacting protein 4 (GIP4), found in Saccharomyces cerevisiae (strain ATCC 204508 / S288c) (Baker's yeast).